The following is a 538-amino-acid chain: Bifunctional purine biosynthesis protein PurH (538 aa).

Residues 11–158 (PDLHRVRRAL…KNHAYTGVVT (148 aa)) form the MGS-like domain.

It belongs to the PurH family.

It catalyses the reaction (6R)-10-formyltetrahydrofolate + 5-amino-1-(5-phospho-beta-D-ribosyl)imidazole-4-carboxamide = 5-formamido-1-(5-phospho-D-ribosyl)imidazole-4-carboxamide + (6S)-5,6,7,8-tetrahydrofolate. The catalysed reaction is IMP + H2O = 5-formamido-1-(5-phospho-D-ribosyl)imidazole-4-carboxamide. It participates in purine metabolism; IMP biosynthesis via de novo pathway; 5-formamido-1-(5-phospho-D-ribosyl)imidazole-4-carboxamide from 5-amino-1-(5-phospho-D-ribosyl)imidazole-4-carboxamide (10-formyl THF route): step 1/1. Its pathway is purine metabolism; IMP biosynthesis via de novo pathway; IMP from 5-formamido-1-(5-phospho-D-ribosyl)imidazole-4-carboxamide: step 1/1. The protein is Bifunctional purine biosynthesis protein PurH of Bartonella bacilliformis (strain ATCC 35685 / KC583 / Herrer 020/F12,63).